Reading from the N-terminus, the 186-residue chain is Calcium-binding protein NCSA (186 aa).

4 consecutive EF-hand domains span residues 40-58, 66-93, 94-129, and 142-177; these read SGTINKQEFKEIMTQMGVG, LFNVFDKNKDSTINFQEFVCGLSSITRG, TPEEKIEFAFSLYDIDGNGYITRSEMESILESMYKL, and DPHDLIEEFFDSMDDDGDGYISLEEYKRGTLKNPDI. Positions 107, 109, 111, 113, 118, 155, 157, 159, 161, and 166 each coordinate Ca(2+).

It belongs to the recoverin family.

May prevent cells from entering development prematurely in the presence of environmental nutrients. This is Calcium-binding protein NCSA (ncsA) from Dictyostelium discoideum (Social amoeba).